The primary structure comprises 239 residues: MGWQRPDGRQSHQLRPISFERGFTRFAAGSVLTRCGQTQVLCNVTVRPGVPKFLEGRGQGWLTAEYRMLPAATPQRQEREMLKLSGRTQEIQRLIGRSLRAALDFDLLGERTLVVDADVLQADAGTRTTAITGSFVALADAIDQLLQAGELQRSPIRNYVAAVSVGLLEGEPFLDLSYQEDVAASVDFNVVMTESLQILELQGTAEGESFSRTQLNQILDVAEVGIRELIAAQKSVLGQ.

Residues Arg87 and 125–127 contribute to the phosphate site; that span reads GTR.

The protein belongs to the RNase PH family. As to quaternary structure, homohexameric ring arranged as a trimer of dimers.

The enzyme catalyses tRNA(n+1) + phosphate = tRNA(n) + a ribonucleoside 5'-diphosphate. In terms of biological role, phosphorolytic 3'-5' exoribonuclease that plays an important role in tRNA 3'-end maturation. Removes nucleotide residues following the 3'-CCA terminus of tRNAs; can also add nucleotides to the ends of RNA molecules by using nucleoside diphosphates as substrates, but this may not be physiologically important. Probably plays a role in initiation of 16S rRNA degradation (leading to ribosome degradation) during starvation. The sequence is that of Ribonuclease PH from Cyanothece sp. (strain PCC 7425 / ATCC 29141).